The following is a 480-amino-acid chain: Alpha-glucosidase (480 aa).

Residue 4–70 (VKIGIIGAGS…ADLKFEKTMN (67 aa)) participates in NAD(+) binding. Positions 119 and 153 each coordinate substrate. Residue Cys174 participates in Mn(2+) binding. Residue His175 is the Proton donor of the active site. Residue His203 participates in Mn(2+) binding. Asp260 serves as the catalytic Proton acceptor.

This sequence belongs to the glycosyl hydrolase 4 family. In terms of assembly, homodimer. NAD(+) is required as a cofactor. Requires Mn(2+) as cofactor. It depends on Co(2+) as a cofactor. The cofactor is Ni(2+).

The enzyme catalyses Hydrolysis of terminal, non-reducing (1-&gt;4)-linked alpha-D-glucose residues with release of alpha-D-glucose.. With respect to regulation, inhibited by Hg(2+) ion and EDTA. Functionally, alpha-glycosidase with a very broad specificity. Hydrolyzes maltose and other small maltooligosaccharides but is inactive against the polymeric substrate starch. AglA is not specific with respect to the configuration at the C-4 position of its substrates because glycosidic derivatives of D-galactose are also hydrolyzed. Does not cleave beta-glycosidic bonds. The chain is Alpha-glucosidase (aglA) from Thermotoga maritima (strain ATCC 43589 / DSM 3109 / JCM 10099 / NBRC 100826 / MSB8).